Reading from the N-terminus, the 363-residue chain is Peptide chain release factor 1 (363 aa).

Glutamine 237 is modified (N5-methylglutamine).

The protein belongs to the prokaryotic/mitochondrial release factor family. In terms of processing, methylated by PrmC. Methylation increases the termination efficiency of RF1.

The protein localises to the cytoplasm. Its function is as follows. Peptide chain release factor 1 directs the termination of translation in response to the peptide chain termination codons UAG and UAA. The polypeptide is Peptide chain release factor 1 (Marinobacter nauticus (strain ATCC 700491 / DSM 11845 / VT8) (Marinobacter aquaeolei)).